We begin with the raw amino-acid sequence, 1571 residues long: Neurexin-3 (1571 aa).

Residues 1-27 (MSFTLHSVFFTLKVSIFLGSLVGLCLG) form the signal peptide. Residues 28-202 (LEFMGLPNQW…SVQLEAEGPC (175 aa)) form the Laminin G-like 1 domain. The Extracellular portion of the chain corresponds to 28–1496 (LEFMGLPNQW…EVIRESSSTT (1469 aa)). Asn58 and Asn105 each carry an N-linked (GlcNAc...) asparagine glycan. One can recognise an EGF-like 1 domain in the interval 198–235 (AEGPCGERPCENGGICFLLDGHPTCDCSTTGYGGTLCS). 3 disulfide bridges follow: Cys202–Cys213, Cys207–Cys222, and Cys224–Cys234. 2 Laminin G-like domains span residues 258–440 (VATF…VFKC) and 447–639 (DPIN…KSSC). The Ca(2+) site is built by Asp304, Leu321, and Met374. 5 disulfides stabilise this stretch: Cys404-Cys440, Cys610-Cys639, Cys647-Cys658, Cys652-Cys667, and Cys669-Cys679. The 38-residue stretch at 643–680 (SAKQCDSYPCKNNAVCKDGWNRFICDCTGTGYWGRTCE) folds into the EGF-like 2 domain. 2 consecutive Laminin G-like domains span residues 685–857 (ILSY…IDYC) and 871–1046 (DPVT…ERGC). Ca(2+) is bound by residues Asp732 and Leu749. An N-linked (GlcNAc...) asparagine glycan is attached at Asn757. Residue Arg807 coordinates Ca(2+). Cystine bridges form between Cys1018–Cys1046, Cys1053–Cys1064, Cys1058–Cys1073, and Cys1075–Cys1085. The 38-residue stretch at 1049-1086 (PSTTCQEDSCANQGVCMQQWEGFTCDCSMTSYSGNQCN) folds into the EGF-like 3 domain. In terms of domain architecture, Laminin G-like 6 spans 1090-1290 (ATYIFGKSGG…NPNIKINGSV (201 aa)). Asp1142 and Ile1159 together coordinate Ca(2+). Asn1189 is a glycosylation site (N-linked (GlcNAc...) asparagine). Ca(2+)-binding residues include Ile1241 and Asn1243. N-linked (GlcNAc...) asparagine glycans are attached at residues Asn1287 and Asn1331. Positions 1324–1348 (ATTTTRKNRSTASIQPTSDDLVSSA) are disordered. A compositionally biased stretch (polar residues) spans 1333–1348 (STASIQPTSDDLVSSA). An O-linked (Xyl...) (heparan sulfate) serine glycan is attached at Ser1347. A helical membrane pass occupies residues 1497 to 1517 (GMVVGIVAAAALCILILLYAM). Residues 1518-1571 (YKYRNRDEGSYQVDETRNYISNSAQSNGTLMKEKQASSKSGHKKQKNKDKEYYV) lie on the Cytoplasmic side of the membrane. The tract at residues 1539–1571 (NSAQSNGTLMKEKQASSKSGHKKQKNKDKEYYV) is disordered.

Belongs to the neurexin family. In terms of assembly, the laminin G-like domain 2 binds to NXPH1. Specific isoforms bind to alpha-dystroglycan. The cytoplasmic C-terminal region binds to CASK. Specific isoforms bind neuroligins NLGN1, NLGN2 and NLGN3. Interacts with CLSTN3. O-glycosylated; contains heparan sulfate. Heparan sulfate attachment is required for synapse development by mediating interactions with neuroligins. In terms of tissue distribution, brain and arteries (at protein level).

The protein localises to the presynaptic cell membrane. In terms of biological role, neuronal cell surface protein that may be involved in cell recognition and cell adhesion. May mediate intracellular signaling. The chain is Neurexin-3 (Nrxn3) from Mus musculus (Mouse).